Here is a 197-residue protein sequence, read N- to C-terminus: MSAGEIDRLIGLLARLPGLGPRSARRAALHLLKRRESLMDPLMEALGAVAASVRLCPVCGTLDTRAPCSICADPRRDGTLICVVRDVADLWALERGGVFSGRYHVLGGLLSAIDGVGPEDLGLDRLAARVAEGPVVEVILALPATVEGQTTAHVIADLIEPKGITVSGLAQGVPVGGELDYLDDGTLTAALRARRPV.

The C4-type zinc-finger motif lies at 56–71; it reads CPVCGTLDTRAPCSIC. Residues 79–174 enclose the Toprim domain; it reads TLICVVRDVA…TVSGLAQGVP (96 aa).

Belongs to the RecR family.

Functionally, may play a role in DNA repair. It seems to be involved in an RecBC-independent recombinational process of DNA repair. It may act with RecF and RecO. In Rhodospirillum rubrum (strain ATCC 11170 / ATH 1.1.1 / DSM 467 / LMG 4362 / NCIMB 8255 / S1), this protein is Recombination protein RecR.